The chain runs to 464 residues: Mitogen-activated protein kinase 10 (464 aa).

The 296-residue stretch at 64–359 (YQNLKPIGSG…VDDALQHPYI (296 aa)) folds into the Protein kinase domain. Residues 70 to 78 (IGSGAQGIV) and lysine 93 each bind ATP. Residue aspartate 189 is the Proton acceptor of the active site. Threonine 221 carries the phosphothreonine; by MAP2K7 modification. The short motif at 221 to 223 (TPY) is the TXY element. Position 223 is a phosphotyrosine; by MAP2K4 (tyrosine 223). Residues 405–464 (TKNGVVKGQPSPSGAAVNSSESLPPSSSVNDISSMSTDQTLASDTDSSLEASAGPLGCCR) are disordered. The segment covering 423–432 (SSESLPPSSS) has biased composition (low complexity). Over residues 433–454 (VNDISSMSTDQTLASDTDSSLE) the composition is skewed to polar residues. Residues cysteine 462 and cysteine 463 are each lipidated (S-palmitoyl cysteine).

The protein belongs to the protein kinase superfamily. CMGC Ser/Thr protein kinase family. MAP kinase subfamily. As to quaternary structure, interacts with MAPKBP1. Interacts with MAPK8IP1/JIP-1 and MAPK8IP3/JIP-3/JSAP1. Interacts with SPAG9/MAPK8IP4/JIP4. Interacts with HDAC9. Interacts with ARRB2; the interaction enhances MAPK10 activation by MAP3K5. Interacts with SARM1. Interacts with JUND; interaction is inhibited in the presence of MEN1. Mg(2+) is required as a cofactor. Post-translationally, dually phosphorylated on Thr-221 and Tyr-223 by MAP2K4 and MAP2K7, which activates the enzyme. MAP2K7 shows a strong preference for Thr-221 while MAP2K4 phosphorylates Tyr-223 preferentially. Weakly autophosphorylated on threonine and tyrosine residues in vitro. In terms of processing, palmitoylation regulates subcellular location and axonal development. As to expression, specific to a subset of neurons in the nervous system. Present in the hippocampus and areas, cerebellum, striatum, brain stem, and weakly in the spinal cord. Very weak expression in testis and kidney.

The protein resides in the cytoplasm. It is found in the membrane. It localises to the nucleus. The protein localises to the mitochondrion. The catalysed reaction is L-seryl-[protein] + ATP = O-phospho-L-seryl-[protein] + ADP + H(+). It carries out the reaction L-threonyl-[protein] + ATP = O-phospho-L-threonyl-[protein] + ADP + H(+). Its activity is regulated as follows. Activated by threonine and tyrosine phosphorylation by two dual specificity kinases, MAP2K4 and MAP2K7. MAP2K7 phosphorylates MAPK10 on Thr-221 causing a conformational change and a large increase in Vmax. MAP2K4 then phosphorylates Tyr-223 resulting in a further increase in Vmax. Inhibited by dual specificity phosphatases, such as DUSP1. Inhibited by HDAC9. Its function is as follows. Serine/threonine-protein kinase involved in various processes such as neuronal proliferation, differentiation, migration and programmed cell death. Extracellular stimuli such as pro-inflammatory cytokines or physical stress stimulate the stress-activated protein kinase/c-Jun N-terminal kinase (SAP/JNK) signaling pathway. In this cascade, two dual specificity kinases MAP2K4/MKK4 and MAP2K7/MKK7 phosphorylate and activate MAPK10/JNK3. In turn, MAPK10/JNK3 phosphorylates a number of transcription factors, primarily components of AP-1 such as JUN and ATF2 and thus regulates AP-1 transcriptional activity. Plays regulatory roles in the signaling pathways during neuronal apoptosis. Phosphorylates the neuronal microtubule regulator STMN2. Acts in the regulation of the amyloid-beta precursor protein/APP signaling during neuronal differentiation by phosphorylating APP. Also participates in neurite growth in spiral ganglion neurons. Phosphorylates the CLOCK-BMAL1 heterodimer and plays a role in the photic regulation of the circadian clock. Phosphorylates JUND and this phosphorylation is inhibited in the presence of MEN1. The protein is Mitogen-activated protein kinase 10 (MAPK10) of Homo sapiens (Human).